A 251-amino-acid chain; its full sequence is uncharacterized protein (251 aa).

A divalent metal cation-binding residues include His-6, His-8, Glu-90, His-130, His-154, and Asp-202.

It belongs to the metallo-dependent hydrolases superfamily. TatD-type hydrolase family. A divalent metal cation is required as a cofactor.

This is an uncharacterized protein from Haemophilus influenzae (strain ATCC 51907 / DSM 11121 / KW20 / Rd).